The primary structure comprises 210 residues: Uracil phosphoribosyltransferase (210 aa).

5-phospho-alpha-D-ribose 1-diphosphate-binding positions include Arg-80, Arg-105, and 132-140 (DPMLATGGS). Uracil-binding positions include Ile-195 and 200 to 202 (GDA). Asp-201 contacts 5-phospho-alpha-D-ribose 1-diphosphate.

It belongs to the UPRTase family. Mg(2+) serves as cofactor.

It carries out the reaction UMP + diphosphate = 5-phospho-alpha-D-ribose 1-diphosphate + uracil. It functions in the pathway pyrimidine metabolism; UMP biosynthesis via salvage pathway; UMP from uracil: step 1/1. Allosterically activated by GTP. Functionally, catalyzes the conversion of uracil and 5-phospho-alpha-D-ribose 1-diphosphate (PRPP) to UMP and diphosphate. The chain is Uracil phosphoribosyltransferase from Caldanaerobacter subterraneus subsp. tengcongensis (strain DSM 15242 / JCM 11007 / NBRC 100824 / MB4) (Thermoanaerobacter tengcongensis).